Here is a 384-residue protein sequence, read N- to C-terminus: Prokineticin receptor 2 (384 aa).

The Extracellular segment spans residues 1 to 54 (MAAQNGNTSFTPNFNPPQDHASSLSFNFSYGDYDLPMDEDEDMTKTRTFFAAKI). N-linked (GlcNAc...) asparagine glycans are attached at residues Asn-7 and Asn-27. A helical transmembrane segment spans residues 55–75 (VIGIALAGIMLVCGIGNFVFI). At 76 to 89 (AALTRYKKLRNLTN) the chain is on the cytoplasmic side. The helical transmembrane segment at 90 to 110 (LLIANLAISDFLVAIICCPFE) threads the bilayer. Over 111–136 (MDYYVVRQLSWEHGHVLCASVNYLRT) the chain is Extracellular. Cys-128 and Cys-208 are joined by a disulfide. Residues 137 to 157 (VSLYVSTNALLAIAIDRYLAI) form a helical membrane-spanning segment. Residues 158–171 (VHPLKPRMNYQTAS) are Cytoplasmic-facing. A helical membrane pass occupies residues 172–192 (FLIALVWMVSILIAIPSAYFA). The Extracellular portion of the chain corresponds to 193-223 (TETVLFIVKSQEKIFCGQIWPVDQQLYYKSY). A helical membrane pass occupies residues 224–244 (FLFIFGVEFVGPVVTMTLCYA). Residues 245–273 (RISRELWFKAVPGFQTEQIRKRLRCRRKT) are Cytoplasmic-facing. Residues 274-294 (VLVLMCILTAYVLCWAPFYGF) traverse the membrane as a helical segment. Over 295 to 313 (TIVRDFFPTVFVKEKHYLT) the chain is Extracellular. A helical transmembrane segment spans residues 314–334 (AFYVVECIAMSNSMINTVCFV). The Cytoplasmic segment spans residues 335-384 (TVKNNTMKYFKKMMLLHWRPSQRGSKSSADLDLRTNGVPTTEEVDCIRLK).

Belongs to the G-protein coupled receptor 1 family. As to quaternary structure, homodimer. Expressed in the ileocecum, thyroid gland, pituitary gland, salivary gland, adrenal gland, testis, ovary and brain.

It is found in the cell membrane. Its function is as follows. Receptor for prokineticin 2. Exclusively coupled to the G(q) subclass of heteromeric G proteins. Activation leads to mobilization of calcium, stimulation of phosphoinositide turnover and activation of p44/p42 mitogen-activated protein kinase. In Homo sapiens (Human), this protein is Prokineticin receptor 2 (PROKR2).